A 245-amino-acid polypeptide reads, in one-letter code: DNA repair protein RecO (245 aa).

This sequence belongs to the RecO family.

Involved in DNA repair and RecF pathway recombination. This is DNA repair protein RecO from Klebsiella pneumoniae subsp. pneumoniae (strain ATCC 700721 / MGH 78578).